A 187-amino-acid polypeptide reads, in one-letter code: Large ribosomal subunit protein uL6 (187 aa).

The segment at 159 to 187 (PYKGKGIRYKGEQLSSNPERLQVRSKEVR) is disordered.

Belongs to the universal ribosomal protein uL6 family. In terms of assembly, part of the 50S ribosomal subunit.

Its function is as follows. This protein binds to the 23S rRNA, and is important in its secondary structure. It is located near the subunit interface in the base of the L7/L12 stalk, and near the tRNA binding site of the peptidyltransferase center. The polypeptide is Large ribosomal subunit protein uL6 (Aquifex pyrophilus).